Consider the following 460-residue polypeptide: A-type ATP synthase subunit B (460 aa).

This sequence belongs to the ATPase alpha/beta chains family. As to quaternary structure, has multiple subunits with at least A(3), B(3), C, D, E, F, H, I and proteolipid K(x).

It is found in the cell membrane. Functionally, component of the A-type ATP synthase that produces ATP from ADP in the presence of a proton gradient across the membrane. The B chain is a regulatory subunit. The protein is A-type ATP synthase subunit B of Thermoplasma acidophilum (strain ATCC 25905 / DSM 1728 / JCM 9062 / NBRC 15155 / AMRC-C165).